An 836-amino-acid polypeptide reads, in one-letter code: Probable ribonuclease ZC3H12B (836 aa).

The interval 1–92 (MTATAEVETP…SPCLDRPSFS (92 aa)) is disordered. The span at 8–28 (ETPKMEKSASKEEKQQPKQDS) shows a compositional bias: basic and acidic residues. Acidic residues predominate over residues 35 to 46 (DSEEWMSSESDP). Positions 50–60 (SLKSSDNSKSC) are enriched in polar residues. The span at 70–80 (KEMHSKPHRQL) shows a compositional bias: basic residues. An RNase NYN domain is found at 190-345 (LRPVVIDGSN…LGRHGPSLEN (156 aa)). A C3H1-type zinc finger spans residues 355-380 (EHKKQPCPYGKKCTYGHKCKYYHPER).

It belongs to the ZC3H12 family. The cofactor is Mg(2+).

Its function is as follows. May function as RNase and regulate the levels of target RNA species. This Homo sapiens (Human) protein is Probable ribonuclease ZC3H12B (ZC3H12B).